Reading from the N-terminus, the 407-residue chain is Imidazolonepropionase (407 aa).

Positions 74 and 76 each coordinate Fe(3+). Positions 74 and 76 each coordinate Zn(2+). 4-imidazolone-5-propanoate contacts are provided by R83, Y146, and H179. Y146 is a binding site for N-formimidoyl-L-glutamate. H244 contributes to the Fe(3+) binding site. H244 provides a ligand contact to Zn(2+). Position 247 (Q247) interacts with 4-imidazolone-5-propanoate. D319 provides a ligand contact to Fe(3+). D319 provides a ligand contact to Zn(2+). The N-formimidoyl-L-glutamate site is built by N321 and G323. T324 contributes to the 4-imidazolone-5-propanoate binding site.

The protein belongs to the metallo-dependent hydrolases superfamily. HutI family. It depends on Zn(2+) as a cofactor. Fe(3+) serves as cofactor.

It is found in the cytoplasm. It catalyses the reaction 4-imidazolone-5-propanoate + H2O = N-formimidoyl-L-glutamate. It functions in the pathway amino-acid degradation; L-histidine degradation into L-glutamate; N-formimidoyl-L-glutamate from L-histidine: step 3/3. Its function is as follows. Catalyzes the hydrolytic cleavage of the carbon-nitrogen bond in imidazolone-5-propanoate to yield N-formimidoyl-L-glutamate. It is the third step in the universal histidine degradation pathway. The sequence is that of Imidazolonepropionase from Salmonella paratyphi A (strain ATCC 9150 / SARB42).